Here is a 398-residue protein sequence, read N- to C-terminus: Minor cardiolipin synthase ClsB (398 aa).

A helical membrane pass occupies residues 3 to 23 (VFIVIMIIVVIFFALILLDIF). PLD phosphodiesterase domains follow at residues 141-168 (MQKR…AEEY) and 311-338 (YQGF…DKRS).

Belongs to the phospholipase D family. Cardiolipin synthase subfamily.

The protein resides in the cell membrane. Involved in the biosynthesis of cardiolipin. The protein is Minor cardiolipin synthase ClsB (clsB) of Bacillus subtilis (strain 168).